The primary structure comprises 204 residues: Dephospho-CoA kinase (204 aa).

The DPCK domain maps to 3-204 (VIGLTGGIGS…DRLDLAYRAH (202 aa)). 11-16 (GSGKSY) contacts ATP.

The protein belongs to the CoaE family.

The protein resides in the cytoplasm. It carries out the reaction 3'-dephospho-CoA + ATP = ADP + CoA + H(+). It participates in cofactor biosynthesis; coenzyme A biosynthesis; CoA from (R)-pantothenate: step 5/5. Catalyzes the phosphorylation of the 3'-hydroxyl group of dephosphocoenzyme A to form coenzyme A. The sequence is that of Dephospho-CoA kinase from Ralstonia nicotianae (strain ATCC BAA-1114 / GMI1000) (Ralstonia solanacearum).